We begin with the raw amino-acid sequence, 94 residues long: Cell division protein CrgA (94 aa).

2 helical membrane-spanning segments follow: residues 31–51 (VWFV…LLVF) and 71–91 (LGPW…LLTM).

The protein belongs to the CrgA family.

Its subcellular location is the cell membrane. In terms of biological role, involved in cell division. The polypeptide is Cell division protein CrgA (Mycobacterium sp. (strain JLS)).